The sequence spans 171 residues: 3-hydroxydecanoyl-[acyl-carrier-protein] dehydratase (171 aa).

His69 is a catalytic residue.

It belongs to the thioester dehydratase family. FabA subfamily. In terms of assembly, homodimer.

It is found in the cytoplasm. It carries out the reaction a (3R)-hydroxyacyl-[ACP] = a (2E)-enoyl-[ACP] + H2O. The enzyme catalyses (3R)-hydroxydecanoyl-[ACP] = (2E)-decenoyl-[ACP] + H2O. It catalyses the reaction (2E)-decenoyl-[ACP] = (3Z)-decenoyl-[ACP]. The protein operates within lipid metabolism; fatty acid biosynthesis. In terms of biological role, necessary for the introduction of cis unsaturation into fatty acids. Catalyzes the dehydration of (3R)-3-hydroxydecanoyl-ACP to E-(2)-decenoyl-ACP and then its isomerization to Z-(3)-decenoyl-ACP. Can catalyze the dehydratase reaction for beta-hydroxyacyl-ACPs with saturated chain lengths up to 16:0, being most active on intermediate chain length. In Caulobacter sp. (strain K31), this protein is 3-hydroxydecanoyl-[acyl-carrier-protein] dehydratase.